A 512-amino-acid chain; its full sequence is Mesoderm induction early response protein 1 (512 aa).

The segment covering 1–16 (MAEPSVESSSPGGSAT) has biased composition (low complexity). 2 disordered regions span residues 1 to 63 (MAEP…REGD) and 75 to 173 (YGST…EDYI). Phosphoserine is present on Ser-10. Positions 17–36 (SDDHEFDPSADMLVHDFDDE) are enriched in basic and acidic residues. Composition is skewed to acidic residues over residues 37 to 46 (RTLEEEEMME) and 83 to 105 (EEDEEEEEEEEEGEDDEDADNDD). The span at 129-144 (QSSNDDPSQSVASQDA) shows a compositional bias: polar residues. Ser-141 bears the Phosphoserine mark. Tyr-155 carries the phosphotyrosine modification. Phosphoserine is present on residues Ser-160 and Ser-166. Residues 160 to 173 (SEVEEESEEDEDYI) show a composition bias toward acidic residues. The region spanning 180 to 278 (KEIMVGSMFQ…EALRRLRFNV (99 aa)) is the ELM2 domain. The interaction with HDAC1 stretch occupies residues 180–284 (KEIMVGSMFQ…RFNVKAAREE (105 aa)). Lys-239 participates in a covalent cross-link: Glycyl lysine isopeptide (Lys-Gly) (interchain with G-Cter in SUMO2). The region spanning 283–335 (EELSVWTEEECRNFEQGLKAYGKDFHLIQANKVRTRSVGECVAFYYMWKKSER) is the SANT domain. A disordered region spans residues 366-512 (ESESAASSRA…KFEELENTDD (147 aa)). Ser-367, Ser-369, and Ser-377 each carry phosphoserine. The segment covering 396–409 (TVSTTNQNGVSSNG) has biased composition (polar residues). The segment covering 414 to 423 (LNKEEVKVEG) has biased composition (basic and acidic residues). Lys-420 is covalently cross-linked (Glycyl lysine isopeptide (Lys-Gly) (interchain with G-Cter in SUMO2)). The residue at position 448 (Thr-448) is a Phosphothreonine. A compositionally biased stretch (basic and acidic residues) spans 462-475 (ARNENDFDEKSERP). Residues 482–494 (NSNGKESPGSSEF) show a composition bias toward polar residues. Phosphoserine occurs at positions 483, 488, and 491.

As to quaternary structure, interacts with HDAC1. Part of a complex containing at least CDYL, MIER1, MIER2, HDAC1 and HDAC2.

Its subcellular location is the nucleus. Its function is as follows. Transcriptional repressor regulating the expression of a number of genes including SP1 target genes. Probably functions through recruitment of HDAC1 a histone deacetylase involved in chromatin silencing. In Pongo abelii (Sumatran orangutan), this protein is Mesoderm induction early response protein 1 (MIER1).